A 403-amino-acid polypeptide reads, in one-letter code: Phospholipase A1-II 2 (403 aa).

Serine 218 serves as the catalytic Acyl-ester intermediate. Catalysis depends on charge relay system residues serine 218, aspartate 286, and histidine 323. Residues 381-403 (GPDGRWVLQDHEPDDDDDDDDDD) are disordered. The span at 392 to 403 (EPDDDDDDDDDD) shows a compositional bias: acidic residues.

It belongs to the AB hydrolase superfamily. Lipase family.

The protein localises to the cytoplasm. Acylhydrolase that catalyzes the hydrolysis of phospholipids at the sn-1 position. In Oryza sativa subsp. indica (Rice), this protein is Phospholipase A1-II 2.